Consider the following 879-residue polypeptide: Phosphoenolpyruvate carboxylase (879 aa).

Active-site residues include His-137 and Lys-545.

This sequence belongs to the PEPCase type 1 family. The cofactor is Mg(2+).

The catalysed reaction is oxaloacetate + phosphate = phosphoenolpyruvate + hydrogencarbonate. Forms oxaloacetate, a four-carbon dicarboxylic acid source for the tricarboxylic acid cycle. This Yersinia enterocolitica serotype O:8 / biotype 1B (strain NCTC 13174 / 8081) protein is Phosphoenolpyruvate carboxylase.